We begin with the raw amino-acid sequence, 448 residues long: Potassium/proton antiporter CemA (448 aa).

4 consecutive transmembrane segments (helical) span residues 224-244 (ALAS…ISML), 325-345 (IILH…LFII), 373-393 (ILLL…EIVI), and 408-428 (IISC…KYWI).

Belongs to the CemA family.

It localises to the plastid. The protein localises to the chloroplast inner membrane. It carries out the reaction K(+)(in) + H(+)(out) = K(+)(out) + H(+)(in). In terms of biological role, contributes to K(+)/H(+) antiport activity by supporting proton efflux to control proton extrusion and homeostasis in chloroplasts in a light-dependent manner to modulate photosynthesis. Prevents excessive induction of non-photochemical quenching (NPQ) under continuous-light conditions. Indirectly promotes efficient inorganic carbon uptake into chloroplasts. In Angiopteris evecta (Mule's foot fern), this protein is Potassium/proton antiporter CemA.